The chain runs to 59 residues: Eag protein (59 aa).

The protein is Eag protein (eag) of Salmonella phage P22 (Bacteriophage P22).